Consider the following 500-residue polypeptide: Aldehyde dehydrogenase (500 aa).

Position 246–251 (246–251 (GSTLVG)) interacts with NAD(+). Glu269 functions as the Proton acceptor in the catalytic mechanism. Cys303 acts as the Nucleophile in catalysis.

Belongs to the aldehyde dehydrogenase family.

It catalyses the reaction an aldehyde + NAD(+) + H2O = a carboxylate + NADH + 2 H(+). The protein operates within alcohol metabolism; ethanol degradation; acetate from ethanol: step 2/2. This is Aldehyde dehydrogenase (aldA) from Agaricus bisporus (White button mushroom).